Reading from the N-terminus, the 65-residue chain is Large ribosomal subunit protein bL35 (65 aa).

Over residues 1-26 (MPKIKTHRGAAKRFSKTGTGKIKRSH) the composition is skewed to basic residues. The interval 1–41 (MPKIKTHRGAAKRFSKTGTGKIKRSHAFTSHILTSKTRKNK) is disordered.

The protein belongs to the bacterial ribosomal protein bL35 family.

The polypeptide is Large ribosomal subunit protein bL35 (Geotalea daltonii (strain DSM 22248 / JCM 15807 / FRC-32) (Geobacter daltonii)).